The sequence spans 335 residues: Fructose-1,6-bisphosphatase class 1 (335 aa).

4 residues coordinate Mg(2+): Glu90, Asp112, Leu114, and Asp115. Residues 115–118 (DGSS), Asn210, and Lys276 each bind substrate. Glu282 contributes to the Mg(2+) binding site.

It belongs to the FBPase class 1 family. As to quaternary structure, homotetramer. The cofactor is Mg(2+).

It is found in the cytoplasm. It carries out the reaction beta-D-fructose 1,6-bisphosphate + H2O = beta-D-fructose 6-phosphate + phosphate. Its pathway is carbohydrate biosynthesis; gluconeogenesis. The chain is Fructose-1,6-bisphosphatase class 1 from Ectopseudomonas mendocina (strain ymp) (Pseudomonas mendocina).